A 347-amino-acid chain; its full sequence is Elongation factor Ts (347 aa).

The tract at residues 80 to 83 (TDFV) is involved in Mg(2+) ion dislocation from EF-Tu.

Belongs to the EF-Ts family.

The protein resides in the cytoplasm. Its function is as follows. Associates with the EF-Tu.GDP complex and induces the exchange of GDP to GTP. It remains bound to the aminoacyl-tRNA.EF-Tu.GTP complex up to the GTP hydrolysis stage on the ribosome. This is Elongation factor Ts from Streptococcus gordonii (strain Challis / ATCC 35105 / BCRC 15272 / CH1 / DL1 / V288).